We begin with the raw amino-acid sequence, 117 residues long: Large ribosomal subunit protein bL19 (117 aa).

It belongs to the bacterial ribosomal protein bL19 family.

Functionally, this protein is located at the 30S-50S ribosomal subunit interface and may play a role in the structure and function of the aminoacyl-tRNA binding site. The chain is Large ribosomal subunit protein bL19 from Halorhodospira halophila (strain DSM 244 / SL1) (Ectothiorhodospira halophila (strain DSM 244 / SL1)).